The following is a 274-amino-acid chain: Penicillin-insensitive murein endopeptidase (274 aa).

The first 19 residues, 1 to 19 (MNKTAIALLALLASSASLA), serve as a signal peptide directing secretion. 3 cysteine pairs are disulfide-bonded: cysteine 44-cysteine 265, cysteine 187-cysteine 235, and cysteine 216-cysteine 223. Zn(2+) contacts are provided by histidine 110, histidine 113, aspartate 120, aspartate 147, histidine 150, and histidine 211. The interval 227–274 (PLPPPGDGCGAELQSWFEPPKPGTTKPEKKTPPPLPPSCQALLDEHVI) is disordered.

Belongs to the peptidase M74 family. In terms of assembly, dimer. The cofactor is Zn(2+).

Its subcellular location is the periplasm. Functionally, murein endopeptidase that cleaves the D-alanyl-meso-2,6-diamino-pimelyl amide bond that connects peptidoglycan strands. Likely plays a role in the removal of murein from the sacculus. The sequence is that of Penicillin-insensitive murein endopeptidase from Escherichia coli O1:K1 / APEC.